The following is a 555-amino-acid chain: MSTVDDILEHIGEFHLFQKQTFFLLALLSGAFTPIYVGIVFLGFTPDHHCWSPGAAKLSQRCGWSQAEELNYTVPGLGPSDEASFLSQCMRYEVDWNQSTLDCVDPLSSLAADRNQLPLGPCEHGWVYNTPGSSIVTEFNLVCAHSWMLDLFQSVVNVGFFIGAMMIGYLADRFGRKFCLLVTILINAISGALMAISPNYAWMLVFRFLQGLVSKAGWLIGYILITEFVGLGYRRMVGICYQIAFTVGLLILAGVAYVIPNWRWLQFAVTLPNFCFLLYFWCIPESPRWLISQNKIVKAMKIIKHIAKKNGKSVPVSLQNLTPDEDAGKKLNPSFLDLVRTPQIRKHTLILMYNWFTSSVLYQGLIMHMGLAGDNIYLDFFYSALVEFPAAFIIILTIDRVGRRYPWAVSNMVAGAACLASVFIPDDLQWLKITIACLGRMGITMAYEMVCLVNAELYPTYIRNLGVLVCSSMCDIGGIITPFLVYRLTDIWMEFPLVVFAVVGLVAGALVLLLPETKGKALPETIEDAENMQRPRKKKEKRIYLQVKQADRPLS.

At M1–T21 the chain is on the cytoplasmic side. The chain crosses the membrane as a helical span at residues F22–L42. Residues G43 to D150 are Extracellular-facing. N71 carries an N-linked (GlcNAc...) asparagine glycan. The helical transmembrane segment at L151–A171 threads the bilayer. Residues D172–K177 are Cytoplasmic-facing. The chain crosses the membrane as a helical span at residues F178 to P198. The Extracellular segment spans residues N199–Q210. The chain crosses the membrane as a helical span at residues G211–L231. At G232–G238 the chain is on the cytoplasmic side. A helical transmembrane segment spans residues I239–I259. Topologically, residues P260 to R263 are extracellular. Residues W264–P284 traverse the membrane as a helical segment. The Proline-rich sequence signature appears at P284–R288. The Cytoplasmic portion of the chain corresponds to E285–T348. Residues L349 to M369 form a helical membrane-spanning segment. Residues G370–N375 lie on the Extracellular side of the membrane. Residues I376–L396 traverse the membrane as a helical segment. Residues T397–R404 lie on the Cytoplasmic side of the membrane. A helical transmembrane segment spans residues Y405 to P425. Residues D426–K432 are Extracellular-facing. The helical transmembrane segment at I433–V453 threads the bilayer. The Cytoplasmic portion of the chain corresponds to N454 to N464. The chain crosses the membrane as a helical span at residues L465–V485. Topologically, residues Y486–E494 are extracellular. The helical transmembrane segment at F495 to P515 threads the bilayer. Over E516–S555 the chain is Cytoplasmic.

The protein belongs to the major facilitator (TC 2.A.1) superfamily. Organic cation transporter (TC 2.A.1.19) family. Tyrosine phosphorylated. In terms of tissue distribution, expressed in the kidney, in the proximal tubules of cortex and of the outer medulla. In brain, highly expressed predominantly in regions located at the brain-cerebrospinal fluid border, in the leptomeninges, in the choroid plexus and in a layer boarding the third ventricle. In brain, also observed in the granular cell layer of the cerebellum and in the granular layer and pyramidal cells of the hippocampus in the CA1-CA3 regions. Expressed in tracheal and bronchial ciliated epithelium in the respiratory tract. Expression is greater in the kidney of male than of female.

It is found in the basolateral cell membrane. The protein localises to the basal cell membrane. The protein resides in the apical cell membrane. The enzyme catalyses (R)-noradrenaline(out) = (R)-noradrenaline(in). It catalyses the reaction (R)-adrenaline(out) = (R)-adrenaline(in). The catalysed reaction is serotonin(out) = serotonin(in). It carries out the reaction dopamine(out) = dopamine(in). The enzyme catalyses histamine(out) = histamine(in). It catalyses the reaction thiamine(in) = thiamine(out). The catalysed reaction is creatinine(in) = creatinine(out). It carries out the reaction 1-methylnicotinamide(out) = 1-methylnicotinamide(in). The enzyme catalyses guanidine(out) = guanidine(in). It catalyses the reaction choline(out) = choline(in). The catalysed reaction is agmatine(out) = agmatine(in). It carries out the reaction putrescine(out) = putrescine(in). The enzyme catalyses spermidine(in) = spermidine(out). It catalyses the reaction tyramine(in) = tyramine(out). The catalysed reaction is L-histidyl-L-proline diketopiperazine(in) = L-histidyl-L-proline diketopiperazine(out). It carries out the reaction (R)-salsolinol(in) = (R)-salsolinol(out). The enzyme catalyses N-methyl-(R)-salsolinol(in) = N-methyl-(R)-salsolinol(out). It catalyses the reaction acetylcholine(in) = acetylcholine(out). The catalysed reaction is prostaglandin F2alpha(out) = prostaglandin F2alpha(in). It carries out the reaction prostaglandin E2(out) = prostaglandin E2(in). Its activity is regulated as follows. Tyrosine phosphorylation of the transporter leads to activation of the transport activity. Inhibited by cGMP, most likely through a cGMP-binding protein that interacts with OCT2. Electrogenic voltage-dependent transporter that mediates the transport of a variety of organic cations such as endogenous bioactive amines, cationic drugs and xenobiotics. Functions as a Na(+)-independent, bidirectional uniporter. Cation cellular uptake or release is driven by the electrochemical potential, i.e. membrane potential and concentration gradient. However, may also engage electroneutral cation exchange when saturating concentrations of cation substrates are reached. Predominantly expressed at the basolateral membrane of hepatocytes and proximal tubules and involved in the uptake and disposition of cationic compounds by hepatic and renal clearance from the blood flow. Implicated in monoamine neurotransmitters uptake such as histamine, dopamine, adrenaline/epinephrine, noradrenaline/norepinephrine, serotonin and tyramine, thereby supporting a physiological role in the central nervous system by regulating interstitial concentrations of neurotransmitters. Also capable of transporting dopaminergic neuromodulators cyclo(his-pro), salsolinol and N-methyl-salsolinol, thereby involved in the maintenance of dopaminergic cell integrity in the central nervous system. Mediates the bidirectional transport of acetylcholine (ACh) at the apical membrane of ciliated cell in airway epithelium, thereby playing a role in luminal release of ACh from bronchial epithelium. Also transports guanidine and endogenous monoamines such as vitamin B1/thiamine, creatinine and N-1-methylnicotinamide (NMN). Mediates the uptake and efflux of quaternary ammonium compound choline. Mediates the bidirectional transport of polyamine agmatine and the uptake of polyamine putrescine. Able to transport non-amine endogenous compounds such as prostaglandin E2 (PGE2) and prostaglandin F2-alpha (PGF2-alpha). Also involved in the uptake of xenobiotic 4-(4-(dimethylamino)styryl)-N-methylpyridinium (ASP). May contribute to regulate the transport of organic compounds in testis across the blood-testis-barrier. This is Solute carrier family 22 member 2 from Rattus norvegicus (Rat).